The chain runs to 1005 residues: DNA polymerase (1005 aa).

Belongs to the DNA polymerase type-B family. In terms of assembly, interacts with OPG148. Component of the Uracil-DNA glycosylase(UDG)-OPG148-polymerase complex; OPG148 and OPG116/UDG form a heterodimeric processivity factor that associates with OPG071 to form the processive polymerase holoenzyme.

It catalyses the reaction DNA(n) + a 2'-deoxyribonucleoside 5'-triphosphate = DNA(n+1) + diphosphate. In terms of biological role, catalyzes DNA synthesis. Acquires processivity by associating with a heterodimeric processivity factor comprised of the viral OPG148 and OPG116 proteins, thereby forming the DNA polymerase holoenzyme. Displays 3'- to 5' exonuclease activity. Might participate in viral DNA recombination. Does not perform OPG116/D4synthesis across an abasic site. This chain is DNA polymerase (OPG071), found in Variola virus (isolate Human/India/Ind3/1967) (VARV).